A 426-amino-acid polypeptide reads, in one-letter code: Glutamate-1-semialdehyde 2,1-aminomutase (426 aa).

At Lys265 the chain carries N6-(pyridoxal phosphate)lysine.

This sequence belongs to the class-III pyridoxal-phosphate-dependent aminotransferase family. HemL subfamily. As to quaternary structure, homodimer. It depends on pyridoxal 5'-phosphate as a cofactor.

Its subcellular location is the cytoplasm. The catalysed reaction is (S)-4-amino-5-oxopentanoate = 5-aminolevulinate. It functions in the pathway porphyrin-containing compound metabolism; protoporphyrin-IX biosynthesis; 5-aminolevulinate from L-glutamyl-tRNA(Glu): step 2/2. This Escherichia coli O81 (strain ED1a) protein is Glutamate-1-semialdehyde 2,1-aminomutase.